Reading from the N-terminus, the 213-residue chain is Thymidylate kinase (213 aa).

Position 10-17 (10-17 (GLEGAGKT)) interacts with ATP.

This sequence belongs to the thymidylate kinase family.

The enzyme catalyses dTMP + ATP = dTDP + ADP. Phosphorylation of dTMP to form dTDP in both de novo and salvage pathways of dTTP synthesis. This Escherichia coli O6:K15:H31 (strain 536 / UPEC) protein is Thymidylate kinase.